The following is a 37-amino-acid chain: Cytochrome b6-f complex subunit 5 (37 aa).

A helical membrane pass occupies residues 5-25 (LLSGIVLGLISITSAGLFVTA).

The protein belongs to the PetG family. The 4 large subunits of the cytochrome b6-f complex are cytochrome b6, subunit IV (17 kDa polypeptide, PetD), cytochrome f and the Rieske protein, while the 4 small subunits are PetG, PetL, PetM and PetN. The complex functions as a dimer.

It is found in the plastid. The protein localises to the chloroplast thylakoid membrane. Component of the cytochrome b6-f complex, which mediates electron transfer between photosystem II (PSII) and photosystem I (PSI), cyclic electron flow around PSI, and state transitions. PetG is required for either the stability or assembly of the cytochrome b6-f complex. The protein is Cytochrome b6-f complex subunit 5 of Psilotum nudum (Whisk fern).